Reading from the N-terminus, the 98-residue chain is uncharacterized protein (98 aa).

This sequence belongs to the CFAP97 family. As to expression, expressed in a number of tissues including brain, thymus, lung, heart, liver, spleen, kidney and testis.

This is an uncharacterized protein from Mus musculus (Mouse).